A 510-amino-acid chain; its full sequence is Crotonobetaine/carnitine--CoA ligase (510 aa).

It belongs to the ATP-dependent AMP-binding enzyme family.

The enzyme catalyses 4-(trimethylamino)butanoate + ATP + CoA = 4-(trimethylamino)butanoyl-CoA + AMP + diphosphate. It carries out the reaction crotonobetaine + ATP + CoA = crotonobetainyl-CoA + AMP + diphosphate. The catalysed reaction is (R)-carnitine + ATP + CoA = (R)-carnitinyl-CoA + AMP + diphosphate. Its pathway is amine and polyamine metabolism; carnitine metabolism. Its function is as follows. Catalyzes the transfer of CoA to carnitine, generating the initial carnitinyl-CoA needed for the CaiB reaction cycle. Also has activity toward crotonobetaine and gamma-butyrobetaine. The chain is Crotonobetaine/carnitine--CoA ligase from Shigella flexneri serotype 5b (strain 8401).